Here is a 512-residue protein sequence, read N- to C-terminus: Ribonuclease Y (512 aa).

The chain crosses the membrane as a helical span at residues 2–22; sequence VGMYIIIPIVTFIIGGLLAWL. Residues 202–262 form the KH domain; it reads SITVFHIESD…VRREIARLAL (61 aa). The region spanning 328–421 is the HD domain; that stretch reads LLQHARETAN…VQVCDAISGA (94 aa).

Belongs to the RNase Y family.

Its subcellular location is the cell membrane. Functionally, endoribonuclease that initiates mRNA decay. In Parabacteroides distasonis (strain ATCC 8503 / DSM 20701 / CIP 104284 / JCM 5825 / NCTC 11152), this protein is Ribonuclease Y.